We begin with the raw amino-acid sequence, 707 residues long: MDFHHKNNYGLYALEILAQYHNISINPEEIKHKFDINGVGLDLTSWLLAAKSLELKVKAVKKTIERLNFIYLPALVWREDGHHFILTKVNKESNRYLIYDLEQRNPRVLEQAEFEDLYQGNIILITSRSSVIGKLAKFDFTWFIPAVIKYRKIFIETLIVSVFLQLFALITPLFFQVVMDKVLVHRGFSTLNIITIALAVVAIFEITLSGLRTYIFTHSTSRIDVELGAKLFRHLLALPISYFESRRVGDTVARVRELDQIRNFLTGQALTSILDLLFSFIFFAVMWYYSPKLTLVILFSLPCYATWSIFISPILRRRLDDKFARNADNQSFLVESVTAINTIKAMAVSPQMTNIWDKQLAGYVAAGFKVTVLATIGQQGIQLIQKAVMIINLWLGAHLVISGDLSIGQLIAFNMLAGQIVAPVIRLAQLWQDFQQVGISVTRLGDVLNYPTESYQGKLTLPEINGDISFRNIRFRYKPDAPIILNNINLNIKQGEIIGIVGRSGSGKSTLTKLIQRFYIPENGQVLIDGHDLALADPNWLRRQVGVVLQDNVLLNRSIIDNIALADPGMPVEKVIHAAKLAGAHDFISELREGYNTIVGEQGAGLSGGQRQRIAIARALVNNPKILIFDEATSALDYESEHVIMRNMHKICQGRTVIIIAHRLSTVKNADRIIVMEKGQIIEQGKHKELLSDPESLYHYLHQLQSD.

The 124-residue stretch at 2–125 (DFHHKNNYGL…DLYQGNIILI (124 aa)) folds into the Peptidase C39 domain. Histidine 83 is an active-site residue. The 283-residue stretch at 154–436 (FIETLIVSVF…LAQLWQDFQQ (283 aa)) folds into the ABC transmembrane type-1 domain. 5 helical membrane passes run 158 to 178 (LIVS…FQVV), 191 to 211 (LNII…LSGL), 269 to 289 (ALTS…MWYY), 295 to 315 (LVIL…SPIL), and 387 to 407 (AVMI…DLSI). The 236-residue stretch at 468–703 (ISFRNIRFRY…PESLYHYLHQ (236 aa)) folds into the ABC transporter domain. An ATP-binding site is contributed by 502-509 (GRSGSGKS).

This sequence belongs to the ABC transporter superfamily. Protein-1 exporter (TC 3.A.1.109) family.

It is found in the cell membrane. In terms of biological role, involved in the export of hemolysin A. This chain is Alpha-hemolysin translocation ATP-binding protein HlyB (hlyB), found in Proteus vulgaris.